The following is a 326-amino-acid chain: Protein GVP36 (326 aa).

An N-acetylserine modification is found at Ser2. The residue at position 2 (Ser2) is a Phosphoserine. Residues Lys13, Lys305, and Lys313 each participate in a glycyl lysine isopeptide (Lys-Gly) (interchain with G-Cter in ubiquitin) cross-link. The segment at 299 to 326 (AEEPEAKPEVAEEEKPQTAISMNDEDDA) is disordered. Residues 302–314 (PEAKPEVAEEEKP) are compositionally biased toward basic and acidic residues. A Phosphoserine modification is found at Ser319.

The protein resides in the golgi apparatus membrane. This Saccharomyces cerevisiae (strain ATCC 204508 / S288c) (Baker's yeast) protein is Protein GVP36 (GVP36).